The primary structure comprises 163 residues: Nucleotide-binding protein Cj0374 (163 aa).

The protein belongs to the YajQ family.

Its function is as follows. Nucleotide-binding protein. The chain is Nucleotide-binding protein Cj0374 from Campylobacter jejuni subsp. jejuni serotype O:2 (strain ATCC 700819 / NCTC 11168).